The sequence spans 257 residues: V-type proton ATPase subunit D (257 aa).

The tract at residues 215–257 (KEQEAAQKALEGPGPGEDAAHSENNPPRNLLASEEDNLPVLFN) is disordered.

It belongs to the V-ATPase D subunit family. As to quaternary structure, V-ATPase is a heteromultimeric enzyme made up of two complexes: the ATP-hydrolytic V1 complex and the proton translocation V0 complex. The V1 complex consists of three catalytic AB heterodimers that form a heterohexamer, three peripheral stalks each consisting of EG heterodimers, one central rotor including subunits D and F, and the regulatory subunits C and H. The proton translocation complex V0 consists of the proton transport subunit a, a ring of proteolipid subunits c9c'', rotary subunit d, subunits e and f, and the accessory subunits vah-19/Ac45 and vah-20/PRR.

Subunit of the V1 complex of vacuolar(H+)-ATPase (V-ATPase), a multisubunit enzyme composed of a peripheral complex (V1) that hydrolyzes ATP and a membrane integral complex (V0) that translocates protons. V-ATPase is responsible for acidifying and maintaining the pH of intracellular compartments and in some cell types, is targeted to the plasma membrane, where it is responsible for acidifying the extracellular environment. The protein is V-type proton ATPase subunit D of Caenorhabditis elegans.